The chain runs to 224 residues: PKHD-type hydroxylase Sbal_3634 (224 aa).

Residues 78–176 form the Fe2OG dioxygenase domain; the sequence is QFYPPLFNRY…RTAAFMWLQS (99 aa). Residues H96, D98, and H157 each contribute to the Fe cation site. A 2-oxoglutarate-binding site is contributed by R167.

Requires Fe(2+) as cofactor. It depends on L-ascorbate as a cofactor.

This is PKHD-type hydroxylase Sbal_3634 from Shewanella baltica (strain OS155 / ATCC BAA-1091).